Reading from the N-terminus, the 144-residue chain is Phospholipase A2 (144 aa).

The N-terminal stretch at 1 to 15 (MKFLVLAALLTAGTA) is a signal peptide. Positions 16–22 (ASGVSPT) are cleaved as a propeptide — activation peptide. Intrachain disulfides connect Cys33–Cys99, Cys49–Cys144, Cys51–Cys67, Cys66–Cys127, Cys73–Cys120, Cys83–Cys113, and Cys106–Cys118. Positions 50, 52, and 54 each coordinate Ca(2+). His70 is a catalytic residue. Position 71 (Asp71) interacts with Ca(2+). Residue Asp121 is part of the active site.

The protein belongs to the phospholipase A2 family. In terms of assembly, monomer or homodimer. Ca(2+) is required as a cofactor. Activated by trypsin cleavage in the duodenum. Can also be activated by thrombin or autocatalytically.

The protein localises to the secreted. It catalyses the reaction a 1,2-diacyl-sn-glycero-3-phosphocholine + H2O = a 1-acyl-sn-glycero-3-phosphocholine + a fatty acid + H(+). The enzyme catalyses 1,2-ditetradecanoyl-sn-glycero-3-phosphocholine + H2O = 1-tetradecanoyl-sn-glycero-3-phosphocholine + tetradecanoate + H(+). It carries out the reaction 1,2-dihexadecanoyl-sn-glycero-3-phosphocholine + H2O = 1-hexadecanoyl-sn-glycero-3-phosphocholine + hexadecanoate + H(+). The catalysed reaction is 1-hexadecanoyl-2-(9Z-octadecenoyl)-sn-glycero-3-phosphocholine + H2O = 1-hexadecanoyl-sn-glycero-3-phosphocholine + (9Z)-octadecenoate + H(+). It catalyses the reaction 1-hexadecanoyl-2-(5Z,8Z,11Z,14Z-eicosatetraenoyl)-sn-glycero-3-phosphocholine + H2O = 1-hexadecanoyl-sn-glycero-3-phosphocholine + (5Z,8Z,11Z,14Z)-eicosatetraenoate + H(+). The enzyme catalyses 1-hexadecanoyl-2-(9Z-octadecenoyl)-sn-glycero-3-phospho-(1'-sn-glycerol) + H2O = 1-hexadecanoyl-sn-glycero-3-phospho-(1'-sn-glycerol) + (9Z)-octadecenoate + H(+). It carries out the reaction N-hexadecanoyl-1,2-di-(9Z-octadecenoyl)-sn-glycero-3-phosphoethanolamine + H2O = N-hexadecanoyl-1-(9Z-octadecenoyl)-sn-glycero-3-phosphoethanolamine + (9Z)-octadecenoate + H(+). The catalysed reaction is 1-hexadecanoyl-2-(9Z,12Z-octadecadienoyl)-sn-glycero-3-phosphoethanolamine + H2O = 1-hexadecanoyl-sn-glycero-3-phosphoethanolamine + (9Z,12Z)-octadecadienoate + H(+). It catalyses the reaction N,1-dihexadecanoyl-2-(9Z,12Z-octadecadienoyl)-sn-glycero-3-phosphoethanolamine + H2O = N,1-dihexadecanoyl-sn-glycero-3-phosphoethanolamine + (9Z,12Z)-octadecadienoate + H(+). Its function is as follows. Secretory calcium-dependent phospholipase A2 that primarily targets dietary phospholipids in the intestinal tract. Hydrolyzes the ester bond of the fatty acyl group attached at sn-2 position of phospholipids (phospholipase A2 activity) with preference for phosphatidylethanolamines and phosphatidylglycerols over phosphatidylcholines. May play a role in the biosynthesis of N-acyl ethanolamines that regulate energy metabolism and inflammation in the intestinal tract. Hydrolyzes N-acyl phosphatidylethanolamines to N-acyl lysophosphatidylethanolamines, which are further cleaved by a lysophospholipase D to release N-acyl ethanolamines. May act in an autocrine and paracrine manner. Has anti-helminth activity in a process regulated by gut microbiota. Upon helminth infection of intestinal epithelia, directly affects phosphatidylethanolamine contents in the membrane of helminth larvae, likely controlling an array of phospholipid-mediated cellular processes such as membrane fusion and cell division while providing for better immune recognition, ultimately reducing larvae integrity and infectivity. The polypeptide is Phospholipase A2 (PLA2G1B) (Oryctolagus cuniculus (Rabbit)).